The sequence spans 354 residues: MVLNANHLQTKKTIKETLLAPRFYTTDFDEISRYDISSNFEEIEAIVNEFRSDYNKKHFIRDEEFDRHWSQIDAQTKQMFVEFLERSCTAEFSGFLLYKELARKLKEKMPVLAEGFLLMSRDEARHAGFLNKAMADFNLTLDLGFMTKNRRYTFFKPKFIFYATYLSEKIGYWRYITIYRHLEKHPEHRIYPIFKFFESWCQDENRHGDFFAAIVKSQPYLLEGFISKLWCRFFLLAVFATMYLNDCQRGEFYKSIGLDPRQFDIYVIQKTNESAAKLFPTVLDLDNPRFFECLDKCACYNKLLLEIDDREQPFFNQVLNVFYKFYLYFLLVLNFIMLYFLRTVNCNSFTRMVK.

The protein belongs to the AcsF family. Fe cation serves as cofactor.

It is found in the plastid. Its subcellular location is the chloroplast. The enzyme catalyses Mg-protoporphyrin IX 13-monomethyl ester + 3 NADPH + 3 O2 + 2 H(+) = 3,8-divinyl protochlorophyllide a + 3 NADP(+) + 5 H2O. Its pathway is porphyrin-containing compound metabolism; chlorophyll biosynthesis (light-independent). Its function is as follows. Catalyzes the formation of the isocyclic ring in chlorophyll biosynthesis. Mediates the cyclase reaction, which results in the formation of divinylprotochlorophyllide (Pchlide) characteristic of all chlorophylls from magnesium-protoporphyrin IX 13-monomethyl ester (MgPMME). This chain is Magnesium-protoporphyrin IX monomethyl ester [oxidative] cyclase, found in Cyanidium caldarium (Red alga).